An 83-amino-acid polypeptide reads, in one-letter code: MPLKETTGKVVSDKMNKTIVVAVENRISHRKYAKTMIRTKKYKAHDENNECTIGDIVTIQETRPLSRTKCWTMVNILSKSFDN.

The protein belongs to the universal ribosomal protein uS17 family. Part of the 30S ribosomal subunit.

The protein resides in the plastid. It localises to the chloroplast. Its function is as follows. One of the primary rRNA binding proteins, it binds specifically to the 5'-end of 16S ribosomal RNA. In Pyropia yezoensis (Susabi-nori), this protein is Small ribosomal subunit protein uS17c (rps17).